The chain runs to 139 residues: Putative pre-16S rRNA nuclease (139 aa).

This sequence belongs to the YqgF nuclease family.

The protein resides in the cytoplasm. In terms of biological role, could be a nuclease involved in processing of the 5'-end of pre-16S rRNA. This chain is Putative pre-16S rRNA nuclease, found in Rubrobacter xylanophilus (strain DSM 9941 / JCM 11954 / NBRC 16129 / PRD-1).